The sequence spans 207 residues: 3,4-dihydroxy-2-butanone 4-phosphate synthase (207 aa).

Residues 28–29 (RE), Asp-33, 140–144 (RRGHT), and Glu-164 contribute to the D-ribulose 5-phosphate site. Position 29 (Glu-29) interacts with Mg(2+). His-143 contacts Mg(2+).

It belongs to the DHBP synthase family. As to quaternary structure, homodimer. The cofactor is Mg(2+). Requires Mn(2+) as cofactor.

It carries out the reaction D-ribulose 5-phosphate = (2S)-2-hydroxy-3-oxobutyl phosphate + formate + H(+). It participates in cofactor biosynthesis; riboflavin biosynthesis; 2-hydroxy-3-oxobutyl phosphate from D-ribulose 5-phosphate: step 1/1. Functionally, catalyzes the conversion of D-ribulose 5-phosphate to formate and 3,4-dihydroxy-2-butanone 4-phosphate. This chain is 3,4-dihydroxy-2-butanone 4-phosphate synthase, found in Oceanobacillus iheyensis (strain DSM 14371 / CIP 107618 / JCM 11309 / KCTC 3954 / HTE831).